The following is a 305-amino-acid chain: UDP-3-O-acyl-N-acetylglucosamine deacetylase (305 aa).

Residues His79, His238, and Asp242 each contribute to the Zn(2+) site. The active-site Proton donor is the His265.

This sequence belongs to the LpxC family. Requires Zn(2+) as cofactor.

The enzyme catalyses a UDP-3-O-[(3R)-3-hydroxyacyl]-N-acetyl-alpha-D-glucosamine + H2O = a UDP-3-O-[(3R)-3-hydroxyacyl]-alpha-D-glucosamine + acetate. It functions in the pathway glycolipid biosynthesis; lipid IV(A) biosynthesis; lipid IV(A) from (3R)-3-hydroxytetradecanoyl-[acyl-carrier-protein] and UDP-N-acetyl-alpha-D-glucosamine: step 2/6. Catalyzes the hydrolysis of UDP-3-O-myristoyl-N-acetylglucosamine to form UDP-3-O-myristoylglucosamine and acetate, the committed step in lipid A biosynthesis. This chain is UDP-3-O-acyl-N-acetylglucosamine deacetylase, found in Mannheimia succiniciproducens (strain KCTC 0769BP / MBEL55E).